Consider the following 442-residue polypeptide: Histidinol dehydrogenase (442 aa).

3 residues coordinate NAD(+): tyrosine 132, glutamine 194, and asparagine 217. The substrate site is built by serine 243, glutamine 265, and histidine 268. Glutamine 265 and histidine 268 together coordinate Zn(2+). Residues glutamate 332 and histidine 333 each act as proton acceptor in the active site. Substrate-binding residues include histidine 333, aspartate 366, glutamate 420, and histidine 425. Aspartate 366 lines the Zn(2+) pocket. Histidine 425 is a Zn(2+) binding site.

Belongs to the histidinol dehydrogenase family. The cofactor is Zn(2+).

It catalyses the reaction L-histidinol + 2 NAD(+) + H2O = L-histidine + 2 NADH + 3 H(+). It functions in the pathway amino-acid biosynthesis; L-histidine biosynthesis; L-histidine from 5-phospho-alpha-D-ribose 1-diphosphate: step 9/9. In terms of biological role, catalyzes the sequential NAD-dependent oxidations of L-histidinol to L-histidinaldehyde and then to L-histidine. The polypeptide is Histidinol dehydrogenase (Idiomarina loihiensis (strain ATCC BAA-735 / DSM 15497 / L2-TR)).